The sequence spans 448 residues: MCDSKDNSGVSEKCGKKFTNYPLNTTPTSLNYNLPEISKKFYNLKNKYSRNGYGLSKTEFPSSIENCPSNEYSIMYDNKDPRFLIRFLLDDGRYIIADRDDGEVFDEAPTYLDNNNHPIISRHYTGEERQKFEQVGSGDYITGEQFFQFYTQNKTRVLSNCRALDSRTILLSTAKIFPIYPPASETQLTAFVNSSFYAAAIPQLPQTSLLENIPEPTSLDDSGVLPKDAVRAVKGSALLPCIIVHDPNLNNSDKMKFNTYYLLEYKEYWHQLWSQIIPAHQTVKIQERTGISEVVQNSMIEDLNMYIGADFGMLFYFRSSGFKEQITRGLNRPLSQTTTQLGERVEEMEYYNSNDLDVRYVKYALAREFTLKRVNGEIVKNWVAVDYRLAGIQSYPNAPITNPLTLTKHTIIRCENSYDGHIFKTPLIFKNGEVIVKTNEELIPKINQ.

The tract at residues 1–198 (MCDSKDNSGV…TAFVNSSFYA (198 aa)) is beta-trefoil domain. Cys67 and Cys161 are oxidised to a cystine. Residues 199–448 (AAIPQLPQTS…NEELIPKINQ (250 aa)) are probable pore-forming domain.

It belongs to the toxin_10 family. In terms of assembly, forms a heterodimer with BinA. Upon toxin crystal solubilization with NaOH at pH 12, only the 63-kDa (binB) and 43-kDa (binA) proteins were detected. Interacts with mosquito protein Cpm1 which acts as its host receptor. In terms of processing, processed by proteases extracted from C.pipiens larval gut; unlike its partner BinA, it does not form a stable digestion product.

The protein resides in the spore. It localises to the perispore. Component of a binary toxin active against Culex and some Aedes mosquito larvae. This subunit alone has no toxic larvicidal activity. This subunit is responsible for localized binding to specific regions of the host larval gut. Binary toxin internalization into host gut cells requires both proteins. In Lysinibacillus sphaericus (Bacillus sphaericus), this protein is Binary larvicide subunit BinB (binB).